The following is an 898-amino-acid chain: Interleukin enhancer-binding factor 3 (898 aa).

One can recognise a DZF domain in the interval 5-378 (RIFVNDDRHV…PMKRPMEEDG (374 aa)). Residues 52–85 (QEKGNSELSEAENMDTPPDDESKEGAGEQKAEHM) form a disordered region. Positions 60–73 (SEAENMDTPPDDES) are enriched in acidic residues. Phosphothreonine is present on Thr67. Positions 74-85 (KEGAGEQKAEHM) are enriched in basic and acidic residues. Lys100 is subject to N6-acetyllysine. Thr188 bears the Phosphothreonine; by PKR mark. Residue Ser190 is modified to Phosphoserine. A Glycyl lysine isopeptide (Lys-Gly) (interchain with G-Cter in ubiquitin) cross-link involves residue Lys297. A Phosphothreonine; by PKR modification is found at Thr315. Residue Lys348 forms a Glycyl lysine isopeptide (Lys-Gly) (interchain with G-Cter in SUMO1) linkage. The interval 363–402 (TTYAITPMKRPMEEDGEEKSPSKKKKKIQKKEEKADPPQA) is disordered. The Bipartite nuclear localization signal motif lies at 371–389 (KRPMEEDGEEKSPSKKKKK). The span at 372–383 (RPMEEDGEEKSP) shows a compositional bias: basic and acidic residues. Phosphoserine is present on residues Ser382 and Ser384. Residue Lys396 forms a Glycyl lysine isopeptide (Lys-Gly) (interchain with G-Cter in SUMO2) linkage. One can recognise a DRBM 1 domain in the interval 398-467 (DPPQAMNALM…AVKVLQDMGL (70 aa)). The residue at position 460 (Lys460) is an N6-acetyllysine. Disordered regions lie at residues 466–495 (GLPT…IVAP) and 505–524 (PSSV…LTKH). Over residues 472–481 (EGRDSSKGED) the composition is skewed to basic and acidic residues. Phosphoserine occurs at positions 476, 477, 482, and 486. Lys489 is covalently cross-linked (Glycyl lysine isopeptide (Lys-Gly) (interchain with G-Cter in SUMO2)). Residues 524-590 (HGKNPVMELN…ALAALEKLFP (67 aa)) enclose the DRBM 2 domain. Thr592 carries the post-translational modification Phosphothreonine. An interaction with PRMT1 region spans residues 609–898 (RGGPKFAAKP…TEHSMNYQYR (290 aa)). Disordered stretches follow at residues 631–661 (NEVP…GGAN) and 719–898 (QGDS…YQYR). The segment covering 644–661 (RGGNIRGRGRGRGFGGAN) has biased composition (gly residues). 3 stretches are compositionally biased toward low complexity: residues 745-769 (SYSS…SSYG), 783-794 (GSYSSYSNSYNS), and 802-812 (DYSYDSKFNYS). Phosphoserine occurs at positions 794, 812, 814, and 818. Residues 813 to 822 (GSGGRSGGNS) are compositionally biased toward gly residues. Low complexity predominate over residues 823 to 834 (YGSSGSSSYNTG). Residues 835–845 (SHGGYGTGSGG) show a composition bias toward gly residues. Positions 846 to 886 (SSSYQGKQGGYSSQSNYSSPGSSQSYSGPASSYQSSQGGYS) are enriched in low complexity.

In terms of assembly, identified in a IGF2BP1-dependent mRNP granule complex containing untranslated mRNAs. Interacts with FUS and SMN. Interacts (via C-terminus) with PRMT1. Forms a complex with ILF2. Can also bind to PRKDC/XRCC7: this may stabilize the interaction of PRKDC/XRCC7 and the heterodimeric complex of XRCC6/KU70 and XRCC5/KU80. Forms a heteromeric complex with ZNF346 and ILF3. Found in a nuclear export complex with XPO5, ILF3, Ran and double-stranded RNA or double-stranded minihelix VA1 RNA. Found in a nuclear export complex with XPO5, RAN, ILF3, ZNF346 and double-stranded RNA. Interacts with XPO5 and ZNF346. Forms a complex with ILF2, YLPM1, KHDRBS1, RBMX, NCOA5 and PPP1CA. Interacts with AGO1 and AGO2. Interacts with DHX36; this interaction occurs in a RNA-dependent manner. Interacts with ELAVL1; this interaction occurs in a RNA-dependent manner. Interacts with HAVCR2; this interaction promotes ILF3 ubiquitination and subsequent degradation. Phosphorylated at Thr-188 and Thr-315 by PKR in response to RNA viruses. This phosphorylation results in the dissociation of ILF2 from the ILF2-ILF3 complex resulting in a cytoplasmic sequestration of ILF3 where it can bind to viral RNAs and impede viral replication. In terms of processing, methylated by protein arginine N-methyltransferase 1. Ubiquitous. Expressed at high levels in the thymus, testis, ovary and at lower levelss in the spleen.

The protein localises to the nucleus. The protein resides in the nucleolus. It is found in the cytoplasm. In terms of biological role, RNA-binding protein that plays an essential role in the biogenesis of circular RNAs (circRNAs) which are produced by back-splicing circularization of pre-mRNAs. Within the nucleus, promotes circRNAs processing by stabilizing the regulatory elements residing in the flanking introns of the circularized exons. Plays thereby a role in the back-splicing of a subset of circRNAs. As a consequence, participates in a wide range of transcriptional and post-transcriptional processes. Binds to poly-U elements and AU-rich elements (AREs) in the 3'-UTR of target mRNAs. Upon viral infection, ILF3 accumulates in the cytoplasm and participates in the innate antiviral response. Mechanistically, ILF3 becomes phosphorylated and activated by the double-stranded RNA-activated protein kinase/PKR which releases ILF3 from cellular mature circRNAs. In turn, unbound ILF3 molecules are able to interact with and thus inhibit viral mRNAs. This is Interleukin enhancer-binding factor 3 (Ilf3) from Mus musculus (Mouse).